The sequence spans 329 residues: DNA-directed RNA polymerase subunit alpha (329 aa).

An alpha N-terminal domain (alpha-NTD) region spans residues 1–234 (MQGSVTEFLK…EQLDAFVELR (234 aa)). The tract at residues 248 to 329 (FDPILLRPVD…WPPASLVDDL (82 aa)) is alpha C-terminal domain (alpha-CTD).

This sequence belongs to the RNA polymerase alpha chain family. Homodimer. The RNAP catalytic core consists of 2 alpha, 1 beta, 1 beta' and 1 omega subunit. When a sigma factor is associated with the core the holoenzyme is formed, which can initiate transcription.

The enzyme catalyses RNA(n) + a ribonucleoside 5'-triphosphate = RNA(n+1) + diphosphate. Functionally, DNA-dependent RNA polymerase catalyzes the transcription of DNA into RNA using the four ribonucleoside triphosphates as substrates. The chain is DNA-directed RNA polymerase subunit alpha from Shewanella denitrificans (strain OS217 / ATCC BAA-1090 / DSM 15013).